The following is a 419-amino-acid chain: Putative BTB/POZ domain-containing protein L85 (419 aa).

The 74-residue stretch at 16–89 (TDLTIVLKDD…FYDKTSTNSE (74 aa)) folds into the BTB domain. The interval 250-290 (SSSNDSDEDASETESEHNSETESEHNSETESEHNSETESKH) is disordered. The segment covering 263 to 290 (ESEHNSETESEHNSETESEHNSETESKH) has biased composition (basic and acidic residues).

It belongs to the mimivirus BTB/WD family.

The sequence is that of Putative BTB/POZ domain-containing protein L85 from Acanthamoeba polyphaga (Amoeba).